The primary structure comprises 147 residues: Transcriptional regulator MraZ (147 aa).

2 consecutive SpoVT-AbrB domains span residues 5–51 (GTPV…PQPV) and 80–123 (ACDV…DSEK).

Belongs to the MraZ family. In terms of assembly, forms oligomers.

Its subcellular location is the cytoplasm. It is found in the nucleoid. This chain is Transcriptional regulator MraZ, found in Nitrosospira multiformis (strain ATCC 25196 / NCIMB 11849 / C 71).